The following is a 90-amino-acid chain: Phosphoribosyl-ATP pyrophosphatase (90 aa).

This sequence belongs to the PRA-PH family.

Its subcellular location is the cytoplasm. The catalysed reaction is 1-(5-phospho-beta-D-ribosyl)-ATP + H2O = 1-(5-phospho-beta-D-ribosyl)-5'-AMP + diphosphate + H(+). Its pathway is amino-acid biosynthesis; L-histidine biosynthesis; L-histidine from 5-phospho-alpha-D-ribose 1-diphosphate: step 2/9. The protein is Phosphoribosyl-ATP pyrophosphatase (hisE) of Streptomyces coelicolor (strain ATCC BAA-471 / A3(2) / M145).